An 838-amino-acid polypeptide reads, in one-letter code: Transient receptor potential cation channel subfamily V member 1 (838 aa).

2 disordered regions span residues 1–63 (MEQR…PLDC) and 86–109 (RPGDGPASVRPSSQDSVSAGEKPP). Residues 1-432 (MEQRASLDSE…QDKWDRFVKR (432 aa)) are Cytoplasmic-facing. An ANK 1 repeat occupies 110–138 (RLYDRRSIFDAVAQSNCQELESLLPFLQR). Arg-115 lines the ATP pocket. Residue Ser-116 is modified to Phosphoserine; by PKA and PKD. At Thr-144 the chain carries Phosphothreonine; by PKA; in vitro. The ANK 2 repeat unit spans residues 153-185 (TGKTCLLKAMLNLHNGQNDTIALLLDVARKTDS). ATP contacts are provided by residues Lys-155, Lys-160, Asn-164, 199–202 (YKGQ), and 210–211 (ER). ANK repeat units follow at residues 203-228 (TALHIAIERRNMTLVTLLVENGADVQ), 249-276 (ELPLSLAACTNQLAIVKFLLQNSWQPAD), 285-321 (NTVLHALVEVADNTVDNTKFVTSMYNEILILGAKLHP), and 335-358 (TPLALAASSGKIGVLAYILQREIH). Residue Thr-370 is modified to Phosphothreonine; by PKA; in vitro. The stretch at 393–415 (NSVLEVIAYSSSETPNRHDMLLV) is one ANK 7 repeat. The helical transmembrane segment at 433–453 (IFYFNFFVYCLYMIIFTAAAY) threads the bilayer. Topologically, residues 454 to 471 (YRPVEGLPPYKLKNTVGD) are extracellular. The chain crosses the membrane as a helical span at residues 472–497 (YFRVTGEILSVSGGVYFFFRGIQYFL). Topologically, residues 498-510 (QRRPSLKSLFVDS) are cytoplasmic. Residue Ser-502 is modified to Phosphoserine; by PKC/PRKCE. Resiniferatoxin is bound at residue 511 to 512 (YS). The chain crosses the membrane as a helical span at residues 511-531 (YSEILFFVQSLFMLVSVVLYF). Over 532-535 (SQRK) the chain is Extracellular. The helical transmembrane segment at 536–556 (EYVASMVFSLAMGWTNMLYYT) threads the bilayer. Thr-550 and Arg-557 together coordinate resiniferatoxin. The Cytoplasmic segment spans residues 557–571 (RGFQQMGIYAVMIEK). A helical transmembrane segment spans residues 572-599 (MILRDLCRFMFVYLVFLFGFSTAVVTLI). Topologically, residues 600-626 (EDGKNNSLPMESTPHKCRGSACKPGNS) are extracellular. N-linked (GlcNAc...) asparagine glycosylation is present at Asn-604. The pore-forming intramembrane region spans 627–649 (YNSLYSTCLELFKFTIGMGDLEF). Gly-643 is a binding site for Na(+). The short motif at 643–646 (GMGD) is the Selectivity filter element. Asp-646 contacts Ca(2+). Residues 650 to 657 (TENYDFKA) lie on the Extracellular side of the membrane. A helical membrane pass occupies residues 658 to 686 (VFIILLLAYVILTYILLLNMLIALMGETV). Residues 684–712 (ETVNKIAQESKNIWKLQRAITILDTEKSF) form an AD region. At 687–838 (NKIAQESKNI…FKDSMVPGEK (152 aa)) the chain is on the cytoplasmic side. Residue Thr-704 is modified to Phosphothreonine. The interval 767-801 (EGVKRTLSFSLRSGRVSGRNWKNFALVPLLRDAST) is interaction with calmodulin. Position 774 is a phosphoserine; by PKA; in vitro (Ser-774). The interval 777–792 (LRSGRVSGRNWKNFAL) is required for PIP2-mediated channel inhibition. Position 800 is a phosphoserine; by PKC/PRKCE and PKC/PRKCZ (Ser-800). Ser-820 carries the post-translational modification Phosphoserine; by PKA; in vitro.

This sequence belongs to the transient receptor (TC 1.A.4) family. TrpV subfamily. TRPV1 sub-subfamily. As to quaternary structure, homotetramer. Interacts with PIRT. May also form a heteromeric channel with TRPV3. Interacts with CALM, PRKCM and CSK. Interacts with PRKCG and NTRK1, probably by forming a trimeric complex. Interacts with the Scolopendra mutilans RhTx toxin. Interacts with the spider Tau-theraphotoxin-Hs1a. Interacts with TMEM100. Interacts with PACS2. In terms of processing, phosphorylation by PKA reverses capsaicin-induced dephosphorylation at multiple sites, probably including Ser-116 as a major phosphorylation site. Phosphorylation by CAMKII seems to regulate binding to vanilloids. Phosphorylated and modulated by PRKCE, PRKCM and probably PRKCZ. Dephosphorylation by calcineurin seems to lead to receptor desensitization and phosphorylation by CAMKII recovers activity. In terms of tissue distribution, predominantly expressed in trigeminal and dorsal root sensory ganglia. Expressed also in hippocampus, cortex, cerebellum, olfactory bulb, mesencephalon and hindbrain. High expression in the cell bodies and dendrites of neurons in the hippocampus and in the cortex. In the brain detected also in astrocytes and pericytes (at protein level). Isoform 1 and isoform 3 are expressed in brain and peripheral blood mononuclear cells.

The protein resides in the postsynaptic cell membrane. Its subcellular location is the cell projection. The protein localises to the dendritic spine membrane. It is found in the cell membrane. The catalysed reaction is Ca(2+)(in) = Ca(2+)(out). It carries out the reaction Mg(2+)(in) = Mg(2+)(out). It catalyses the reaction Na(+)(in) = Na(+)(out). The enzyme catalyses K(+)(in) = K(+)(out). Its activity is regulated as follows. Channel activity is activated via the interaction with PIRT and phosphatidylinositol 4,5-bisphosphate (PIP2). Both PIRT and PIP2 are required to activate channel activity. The channel is sensitized by ATP binding. Repeated stimulation with capsaicin gives rise to progressively smaller responses, due to desensitization. This desensitization is triggered by the influx of calcium ions and is inhibited by elevated ATP levels. Ca(2+) and CALM displace ATP from its binding site and trigger a conformation change that leads to a closed, desensitized channel. Intracellular PIP2 inhibits desensitization. The double-knot toxin (DkTx) from the Chinese earth tiger tarantula activates the channel and traps it in an open conformation. The Scolopendra mutilans RhTx toxin potentiates the heat activation pathway mediated by this channel by binding to the charge-rich outer pore region (in an activated state). Non-selective calcium permeant cation channel involved in detection of noxious chemical and thermal stimuli. Seems to mediate proton influx and may be involved in intracellular acidosis in nociceptive neurons. Involved in mediation of inflammatory pain and hyperalgesia. Sensitized by a phosphatidylinositol second messenger system activated by receptor tyrosine kinases, which involves PKC isozymes and PCL. Activation by vanilloids, like capsaicin, and temperatures higher than 42 degrees Celsius. Upon activation, exhibits a time- and Ca(2+)-dependent outward rectification, followed by a long-lasting refractory state. Mild extracellular acidic pH (6.5) potentiates channel activation by noxious heat and vanilloids, whereas acidic conditions (pH &lt;6) directly activate the channel. Can be activated by endogenous compounds, including 12-hydroperoxytetraenoic acid and bradykinin. Acts as ionotropic endocannabinoid receptor with central neuromodulatory effects. Triggers a form of long-term depression (TRPV1-LTD) mediated by the endocannabinoid anandamine in the hippocampus and nucleus accumbens by affecting AMPA receptors endocytosis. Functionally, does not display channel activity in response to noxious chemical compounds, such as capsaicin and the vanilloid resiniferatoxin. Channel activity is not elicited by mildly acidic extracellular pH, and only slight channel activity is observed in response to noxiuos heat stimuli. The chain is Transient receptor potential cation channel subfamily V member 1 (Trpv1) from Rattus norvegicus (Rat).